The chain runs to 313 residues: Protein TIC 22-like, chloroplastic (313 aa).

A chloroplast-targeting transit peptide spans 1-96 (MNSNIFPPSK…RISDDGGGAR (96 aa)).

The protein belongs to the Tic22 family.

The protein resides in the plastid. It is found in the chloroplast intermembrane space. Involved in protein precursor import into chloroplasts. In Arabidopsis thaliana (Mouse-ear cress), this protein is Protein TIC 22-like, chloroplastic (TIC22L).